We begin with the raw amino-acid sequence, 155 residues long: Endoribonuclease YbeY (155 aa).

3 residues coordinate Zn(2+): His-117, His-121, and His-127.

Belongs to the endoribonuclease YbeY family. Zn(2+) serves as cofactor.

Its subcellular location is the cytoplasm. Functionally, single strand-specific metallo-endoribonuclease involved in late-stage 70S ribosome quality control and in maturation of the 3' terminus of the 16S rRNA. The polypeptide is Endoribonuclease YbeY (Dichelobacter nodosus (strain VCS1703A)).